The primary structure comprises 474 residues: MDFKVADLSLAEAGRHQIRLAEYEMPGLMQLRKEFADEQPLKGARIAGSIHMTVQTAVLIETLTALGAEVRWASCNIFSTQDEAAAAIVVGSGTVEEPAGVPVFAWKGESLEEYWWCINQIFSWGDELPNMILDDGGDATMAVIRGREYEQAGLVPPAEANDSDEYIAFLGMLREVLAAEPGKWGKIAEAVKGVTEETTTGVHRLYHFAEEGVLPFPAMNVNDAVTKSKFDNKYGTRHSLIDGINRATDMLMGGKNVLVCGYGDVGKGCAEAFDGQGARVKVTEADPINALQALMDGYSVVTVDEAIEDADIVITATGNKDIISFEQMLKMKDHALLGNIGHFDNEIDMHSLLHRDDVTRTTIKPQVDEFTFSTGRSIIVLSEGRLLNLGNATGHPSFVMSNSFADQTIAQIELFQNEGQYENEVYRLPKVLDEKVARIHVEALGGQLTELTKEQAEYIGVDVAGPFKPEHYRY.

Substrate contacts are provided by Thr-53, Asp-135, and Glu-197. 198-200 is an NAD(+) binding site; that stretch reads TTT. 2 residues coordinate substrate: Lys-227 and Asp-231. NAD(+)-binding positions include Asn-232, 261-266, Glu-284, Asn-319, 340-342, and Asn-388; these read GYGDVG and IGH.

This sequence belongs to the adenosylhomocysteinase family. It depends on NAD(+) as a cofactor.

Its subcellular location is the cytoplasm. The enzyme catalyses S-adenosyl-L-homocysteine + H2O = L-homocysteine + adenosine. Its pathway is amino-acid biosynthesis; L-homocysteine biosynthesis; L-homocysteine from S-adenosyl-L-homocysteine: step 1/1. Functionally, may play a key role in the regulation of the intracellular concentration of adenosylhomocysteine. The polypeptide is Adenosylhomocysteinase (Corynebacterium glutamicum (strain ATCC 13032 / DSM 20300 / JCM 1318 / BCRC 11384 / CCUG 27702 / LMG 3730 / NBRC 12168 / NCIMB 10025 / NRRL B-2784 / 534)).